The chain runs to 440 residues: Long-chain alkane monooxygenase (440 aa).

Residues aspartate 58, 137-138 (SH), tyrosine 158, and 227-230 (AGMS) contribute to the FMN site.

Belongs to the NtaA/SnaA/DszA monooxygenase family. In terms of assembly, homodimer.

It is found in the secreted. It carries out the reaction a long-chain alkane + FMNH2 + O2 = a long chain fatty alcohol + FMN + H2O + H(+). Involved in the degradation of long-chain alkanes. Converts alkanes ranging from C(15) to C(36) into their corresponding primary alcohols. The chain is Long-chain alkane monooxygenase from Geobacillus thermodenitrificans (strain NG80-2).